The primary structure comprises 616 residues: MPKYRSATTTHGRNMAGARALWRATGMTDSDFGKPIIAVVNSFTQFVPGHVHLRDLGKLVAEQIEASGGVAKEFNTIAVDDGIAMGHGGMLYSLPSRELIADSVEYMVNAHCADAMVCISNCDKITPGMLMASLRLNIPVIFVSGGPMEAGKTKLSDKIIKLDLVDAMIQGADPKVSDDQSNQVERSACPTCGSCSGMFTANSMNCLTEALGLSQPGNGSLLATHADRKQLFLNAGKRIVELTKRYYEQDDESALPRNIASKAAFENAMTLDIAMGGSTNTVLHLLAAAQEAEIDFTMSDIDKLSRKVPQLCKVAPSTQKYHMEDVHRAGGVLGILGELDRAGLLNRNVKNVLGLTLPQTLEQYDITVTQDEAVKKMFRAGPAGIRTTQAFSQDCRWDSLDDDRAAGCIRSLEYAYSKDGGLAVLYGNFAENGCIVKTAGVDDSILKFTGPAKVYESQDDAVEAILGGKVVEGDVVVIRYEGPKGGPGMQEMLYPTSFLKSMGLGKACALITDGRFSGGTSGLSIGHVSPEAASGGTIALIEDGDTIAIDIPNRSIQLQLSEAEIAARREAQEARGDKAWTPKNRQRQVSFALRAYASLATSADKGAVRDKSKLGG.

Residue aspartate 81 coordinates Mg(2+). Cysteine 122 contacts [2Fe-2S] cluster. Mg(2+)-binding residues include aspartate 123 and lysine 124. Lysine 124 is subject to N6-carboxylysine. Residue cysteine 195 coordinates [2Fe-2S] cluster. Glutamate 491 is a binding site for Mg(2+). Serine 517 (proton acceptor) is an active-site residue.

This sequence belongs to the IlvD/Edd family. Homodimer. It depends on [2Fe-2S] cluster as a cofactor. Requires Mg(2+) as cofactor.

It carries out the reaction (2R)-2,3-dihydroxy-3-methylbutanoate = 3-methyl-2-oxobutanoate + H2O. The catalysed reaction is (2R,3R)-2,3-dihydroxy-3-methylpentanoate = (S)-3-methyl-2-oxopentanoate + H2O. The protein operates within amino-acid biosynthesis; L-isoleucine biosynthesis; L-isoleucine from 2-oxobutanoate: step 3/4. It participates in amino-acid biosynthesis; L-valine biosynthesis; L-valine from pyruvate: step 3/4. In terms of biological role, functions in the biosynthesis of branched-chain amino acids. Catalyzes the dehydration of (2R,3R)-2,3-dihydroxy-3-methylpentanoate (2,3-dihydroxy-3-methylvalerate) into 2-oxo-3-methylpentanoate (2-oxo-3-methylvalerate) and of (2R)-2,3-dihydroxy-3-methylbutanoate (2,3-dihydroxyisovalerate) into 2-oxo-3-methylbutanoate (2-oxoisovalerate), the penultimate precursor to L-isoleucine and L-valine, respectively. The sequence is that of Dihydroxy-acid dehydratase from Salmonella heidelberg (strain SL476).